We begin with the raw amino-acid sequence, 395 residues long: Acid ceramidase (395 aa).

Residues 1–21 (MPGRSRVALVLLAAAVSCAVA) form the signal peptide. C31 and C340 are disulfide-bonded. The active-site Nucleophile is the C143. Residues N195, N259, N286, and N342 are each glycosylated (N-linked (GlcNAc...) asparagine). The cysteines at positions 388 and 392 are disulfide-linked.

It belongs to the acid ceramidase family. In terms of assembly, heterodimer; disulfide-linked. The heterodimer is composed of the disulfide-linked alpha and beta chains produced by autocatalytic cleavage of the precursor. In terms of processing, N-glycosylated. Post-translationally, proteolytically cleaved into two chains alpha and beta that remain associated via a disulfide bond. Cleavage gives rise to a conformation change that activates the enzyme. The same catalytic Cys residue mediates the autoproteolytic cleavage and subsequent hydrolysis of lipid substrates. The beta chain may undergo an additional C-terminal processing.

The protein localises to the lysosome. Its subcellular location is the secreted. It catalyses the reaction an N-acylsphing-4-enine + H2O = sphing-4-enine + a fatty acid. It carries out the reaction N-dodecanoylsphing-4-enine + H2O = dodecanoate + sphing-4-enine. The enzyme catalyses N-tetradecanoylsphing-4-enine + H2O = tetradecanoate + sphing-4-enine. The catalysed reaction is N-hexadecanoylsphing-4-enine + H2O = sphing-4-enine + hexadecanoate. It catalyses the reaction N-octadecanoylsphing-4-enine + H2O = sphing-4-enine + octadecanoate. It carries out the reaction N-dodecanoyl-(4R)-hydroxysphinganine + H2O = (4R)-hydroxysphinganine + dodecanoate. The enzyme catalyses N-(dodecanoyl)-sphinganine + H2O = dodecanoate + sphinganine. The catalysed reaction is N-(acetyl)-sphing-4-enine + H2O = sphing-4-enine + acetate. It catalyses the reaction N-(hexanoyl)sphing-4-enine + H2O = hexanoate + sphing-4-enine. It carries out the reaction N-octanoylsphing-4-enine + H2O = octanoate + sphing-4-enine. The enzyme catalyses N-(9Z-octadecenoyl)-sphing-4-enine + H2O = sphing-4-enine + (9Z)-octadecenoate. The catalysed reaction is N-dodecanoylethanolamine + H2O = dodecanoate + ethanolamine. Its pathway is lipid metabolism; sphingolipid metabolism. Functionally, lysosomal ceramidase that hydrolyzes sphingolipid ceramides into sphingosine and free fatty acids at acidic pH. Ceramides, sphingosine, and its phosphorylated form sphingosine-1-phosphate are bioactive lipids that mediate cellular signaling pathways regulating several biological processes including cell proliferation, apoptosis and differentiation. Has a higher catalytic efficiency towards C12-ceramides versus other ceramides. Also catalyzes the reverse reaction allowing the synthesis of ceramides from fatty acids and sphingosine. For the reverse synthetic reaction, the natural sphingosine D-erythro isomer is more efficiently utilized as a substrate compared to D-erythro-dihydrosphingosine and D-erythro-phytosphingosine, while the fatty acids with chain lengths of 12 or 14 carbons are the most efficiently used. Also has an N-acylethanolamine hydrolase activity. By regulating the levels of ceramides, sphingosine and sphingosine-1-phosphate in the epidermis, mediates the calcium-induced differentiation of epidermal keratinocytes. Also indirectly regulates tumor necrosis factor/TNF-induced apoptosis. By regulating the intracellular balance between ceramides and sphingosine, in adrenocortical cells, probably also acts as a regulator of steroidogenesis. The chain is Acid ceramidase from Pan troglodytes (Chimpanzee).